A 206-amino-acid polypeptide reads, in one-letter code: MENKTEVVVAENANNQTQPERKKFDRKPNRRPQGPKQFQKDDFEEKVVTIRRVTKVTKGGRHFRFAAVVVVGDKKGQVGLGTGKANEVPEAIKKAVKEAKKNLIRVPLRGTTVPHEVIGHFGAGQVLIKPAKPGTGVIAGGPARAVIELAGIADVYAKSLGRNNPINMIRATIDGLSSMHTAKKVNDLRFGKPVIKTEKPKVEETK.

The interval 1–42 is disordered; it reads MENKTEVVVAENANNQTQPERKKFDRKPNRRPQGPKQFQKDD. The 64-residue stretch at 43 to 106 folds into the S5 DRBM domain; the sequence is FEEKVVTIRR…KEAKKNLIRV (64 aa).

This sequence belongs to the universal ribosomal protein uS5 family. As to quaternary structure, part of the 30S ribosomal subunit. Contacts proteins S4 and S8.

With S4 and S12 plays an important role in translational accuracy. In terms of biological role, located at the back of the 30S subunit body where it stabilizes the conformation of the head with respect to the body. In Mesoplasma florum (strain ATCC 33453 / NBRC 100688 / NCTC 11704 / L1) (Acholeplasma florum), this protein is Small ribosomal subunit protein uS5.